The following is a 430-amino-acid chain: Tol-Pal system protein TolB (430 aa).

The signal sequence occupies residues 1–21 (MKQALRVAVSFFMLWAAVLHA).

The protein belongs to the TolB family. As to quaternary structure, the Tol-Pal system is composed of five core proteins: the inner membrane proteins TolA, TolQ and TolR, the periplasmic protein TolB and the outer membrane protein Pal. They form a network linking the inner and outer membranes and the peptidoglycan layer.

It is found in the periplasm. In terms of biological role, part of the Tol-Pal system, which plays a role in outer membrane invagination during cell division and is important for maintaining outer membrane integrity. TolB occupies a key intermediary position in the Tol-Pal system because it communicates directly with both membrane-embedded components, Pal in the outer membrane and TolA in the inner membrane. The protein is Tol-Pal system protein TolB of Enterobacter sp. (strain 638).